The chain runs to 188 residues: Putative protein SSX9 (188 aa).

In terms of domain architecture, KRAB-related spans 20-83; sequence KIQKAFDDIA…TGATDLQGND (64 aa). The disordered stretch occupies residues 114-165; it reads KKPAEVGNDSKEVPEASGLQNDGKQLCPPGKPTTSEKINKASGPKRGKHAWT. The segment covering 115–127 has biased composition (basic and acidic residues); that stretch reads KPAEVGNDSKEVP. Serine 123 carries the post-translational modification Phosphoserine. Residues 156–165 show a composition bias toward basic residues; sequence GPKRGKHAWT.

This sequence belongs to the SSX family. Not detected in any normal or tumor tissues.

In terms of biological role, could act as a modulator of transcription. In Homo sapiens (Human), this protein is Putative protein SSX9.